The following is a 406-amino-acid chain: Collagen and calcium-binding EGF domain-containing protein 1 (406 aa).

An N-terminal signal peptide occupies residues 1–34; it reads MVPPPPSRGGAARGQLGRSLGPLLLLLALGHTWT. The EGF-like; calcium-binding domain occupies 134–175; it reads DIDECASSNGTLCAHICINTLGSYRCECREGYIREDDGKTCT. 3 disulfide bridges follow: cysteine 138/cysteine 150, cysteine 146/cysteine 159, and cysteine 161/cysteine 174. A glycan (N-linked (GlcNAc...) asparagine) is linked at asparagine 142. An N-linked (GlcNAc...) asparagine glycan is attached at asparagine 182. 2 disordered regions span residues 244-335 and 360-406; these read YLPG…PGSF and RTHS…DFYP. 2 Collagen-like domains span residues 245–290 and 300–333; these read LPGP…PMGP and GRRGPVGPPGAPGRDGSKGERGAPGPRGSPGPPG. The span at 270–279 shows a compositional bias: pro residues; sequence PGMPGPPGQP. Low complexity predominate over residues 281-292; that stretch reads PRGSMGPMGPSP. Serine 385 is a glycosylation site (O-linked (Xyl...) (chondroitin sulfate) serine). A compositionally biased stretch (basic and acidic residues) spans 386-406; it reads GDDHPRRTETRDLRAPRDFYP.

The protein belongs to the CCBE1 family. As to expression, detected in fibroblasts and urine (at protein level). Not expressed in blood or lymphatic endothelial cells.

It is found in the secreted. Its function is as follows. Required for lymphangioblast budding and angiogenic sprouting from venous endothelium during embryogenesis. The protein is Collagen and calcium-binding EGF domain-containing protein 1 (CCBE1) of Homo sapiens (Human).